A 214-amino-acid polypeptide reads, in one-letter code: Protein GrpE (214 aa).

The span at 1-13 (MKHTSEPTSQPDT) shows a compositional bias: polar residues. A disordered region spans residues 1-61 (MKHTSEPTSQ…AAVAEATIEP (61 aa)). The segment covering 14-57 (QAAESAQSSAAAAGQAASAYSSQAQRASADAQAIAGDEAAVAEA) has biased composition (low complexity).

This sequence belongs to the GrpE family. In terms of assembly, homodimer.

It is found in the cytoplasm. Its function is as follows. Participates actively in the response to hyperosmotic and heat shock by preventing the aggregation of stress-denatured proteins, in association with DnaK and GrpE. It is the nucleotide exchange factor for DnaK and may function as a thermosensor. Unfolded proteins bind initially to DnaJ; upon interaction with the DnaJ-bound protein, DnaK hydrolyzes its bound ATP, resulting in the formation of a stable complex. GrpE releases ADP from DnaK; ATP binding to DnaK triggers the release of the substrate protein, thus completing the reaction cycle. Several rounds of ATP-dependent interactions between DnaJ, DnaK and GrpE are required for fully efficient folding. The protein is Protein GrpE of Ralstonia nicotianae (strain ATCC BAA-1114 / GMI1000) (Ralstonia solanacearum).